Here is a 307-residue protein sequence, read N- to C-terminus: tRNA pseudouridine synthase B (307 aa).

The active-site Nucleophile is Asp-38.

It belongs to the pseudouridine synthase TruB family. Type 1 subfamily.

The enzyme catalyses uridine(55) in tRNA = pseudouridine(55) in tRNA. Its function is as follows. Responsible for synthesis of pseudouridine from uracil-55 in the psi GC loop of transfer RNAs. The protein is tRNA pseudouridine synthase B of Bacillus cereus (strain ATCC 10987 / NRS 248).